Reading from the N-terminus, the 406-residue chain is Glucose-6-phosphate isomerase (406 aa).

E259 acts as the Proton donor in catalysis. Residues H284 and K397 contribute to the active site.

This sequence belongs to the GPI family.

It is found in the cytoplasm. It catalyses the reaction alpha-D-glucose 6-phosphate = beta-D-fructose 6-phosphate. The protein operates within carbohydrate biosynthesis; gluconeogenesis. It participates in carbohydrate degradation; glycolysis; D-glyceraldehyde 3-phosphate and glycerone phosphate from D-glucose: step 2/4. Its function is as follows. Catalyzes the reversible isomerization of glucose-6-phosphate to fructose-6-phosphate. In Campylobacter jejuni subsp. jejuni serotype O:2 (strain ATCC 700819 / NCTC 11168), this protein is Glucose-6-phosphate isomerase.